Here is a 125-residue protein sequence, read N- to C-terminus: MYAYIFAFFELITFLVPVLLAVAFLTLVERKVLGYMQFRKGPNVVGLTDFCNLFADGLKLFIKETVKPSSASPYLFFASPVLFLTLALLLWNFMPVTSPALDLQLSLLLVLGLSSLSVYAILGSG.

3 consecutive transmembrane segments (helical) span residues 5 to 25 (IFAF…VAFL), 74 to 94 (YLFF…WNFM), and 105 to 125 (LSLL…LGSG).

Belongs to the complex I subunit 1 family.

The protein resides in the mitochondrion inner membrane. It carries out the reaction a ubiquinone + NADH + 5 H(+)(in) = a ubiquinol + NAD(+) + 4 H(+)(out). Its function is as follows. Core subunit of the mitochondrial membrane respiratory chain NADH dehydrogenase (Complex I) that is believed to belong to the minimal assembly required for catalysis. Complex I functions in the transfer of electrons from NADH to the respiratory chain. The immediate electron acceptor for the enzyme is believed to be ubiquinone. The polypeptide is NADH-ubiquinone oxidoreductase chain 1 (ND1) (Arbacia lixula (Black urchin)).